Here is a 485-residue protein sequence, read N- to C-terminus: Hexokinase-1 (485 aa).

One can recognise a Hexokinase domain in the interval 21–468 (KELMDEIHQL…SGAGAAVIAA (448 aa)). Residues 75-209 (TGKESGNYLA…ELPIEIVALI (135 aa)) are hexokinase small subdomain. Residues 86-91 (DLGGTN) and Lys-111 contribute to the ATP site. Substrate-binding positions include Ser-158, 175–176 (TK), 210–211 (ND), and Asn-237. The tract at residues 210 to 457 (NDTVGTLIAS…DPITIVPAED (248 aa)) is hexokinase large subdomain. Ser-245 is modified (phosphoserine). Residue Glu-269 coordinates substrate. Ser-272 carries the phosphoserine modification. A substrate-binding site is contributed by Glu-302. ATP-binding positions include 307 to 308 (GY), 344 to 348 (TSYPA), and 419 to 423 (SVYNK).

This sequence belongs to the hexokinase family. Homodimer.

It carries out the reaction a D-hexose + ATP = a D-hexose 6-phosphate + ADP + H(+). The catalysed reaction is D-fructose + ATP = D-fructose 6-phosphate + ADP + H(+). The enzyme catalyses D-glucose + ATP = D-glucose 6-phosphate + ADP + H(+). Its pathway is carbohydrate metabolism; hexose metabolism. It participates in carbohydrate degradation; glycolysis; D-glyceraldehyde 3-phosphate and glycerone phosphate from D-glucose: step 1/4. Subject to allosteric control. Substrate inhibition by ATP. Its function is as follows. Catalyzes the phosphorylation of hexose, such as D-glucose and D-fructose, to hexose 6-phosphate (D-glucose 6-phosphate and D-fructose 6-phosphate, respectively). Mediates the initial step of glycolysis by catalyzing phosphorylation of D-glucose to D-glucose 6-phosphate. In Saccharomyces cerevisiae (strain ATCC 204508 / S288c) (Baker's yeast), this protein is Hexokinase-1 (HXK1).